A 499-amino-acid polypeptide reads, in one-letter code: Probable cytosol aminopeptidase (499 aa).

Positions 264 and 269 each coordinate Mn(2+). Residue K276 is part of the active site. Mn(2+) is bound by residues D287, D346, and E348. R350 is an active-site residue.

The protein belongs to the peptidase M17 family. Mn(2+) is required as a cofactor.

It is found in the cytoplasm. It catalyses the reaction Release of an N-terminal amino acid, Xaa-|-Yaa-, in which Xaa is preferably Leu, but may be other amino acids including Pro although not Arg or Lys, and Yaa may be Pro. Amino acid amides and methyl esters are also readily hydrolyzed, but rates on arylamides are exceedingly low.. The enzyme catalyses Release of an N-terminal amino acid, preferentially leucine, but not glutamic or aspartic acids.. Functionally, presumably involved in the processing and regular turnover of intracellular proteins. Catalyzes the removal of unsubstituted N-terminal amino acids from various peptides. This chain is Probable cytosol aminopeptidase, found in Rhodopseudomonas palustris (strain BisB18).